A 191-amino-acid polypeptide reads, in one-letter code: Corticoliberin (191 aa).

The N-terminal stretch at methionine 1–alanine 24 is a signal peptide. A propeptide spanning residues leucine 25 to arginine 148 is cleaved from the precursor. Residues proline 115–proline 153 form a disordered region. Positions glutamate 141–glutamate 151 are enriched in basic and acidic residues. Residue isoleucine 189 is modified to Isoleucine amide.

Belongs to the sauvagine/corticotropin-releasing factor/urotensin I family. As to quaternary structure, interacts (via C-terminus) with CRFR1 (via N-terminal extracellular domain). In terms of tissue distribution, produced by the hypothalamus.

The protein resides in the secreted. Functionally, hormone regulating the release of corticotropin from pituitary gland. Induces NLRP6 in intestinal epithelial cells, hence may influence gut microbiota profile. The polypeptide is Corticoliberin (CRH) (Sus scrofa (Pig)).